A 447-amino-acid chain; its full sequence is Na(+)-translocating NADH-quinone reductase subunit A (447 aa).

Belongs to the NqrA family. Composed of six subunits; NqrA, NqrB, NqrC, NqrD, NqrE and NqrF.

The enzyme catalyses a ubiquinone + n Na(+)(in) + NADH + H(+) = a ubiquinol + n Na(+)(out) + NAD(+). Functionally, NQR complex catalyzes the reduction of ubiquinone-1 to ubiquinol by two successive reactions, coupled with the transport of Na(+) ions from the cytoplasm to the periplasm. NqrA to NqrE are probably involved in the second step, the conversion of ubisemiquinone to ubiquinol. This Klebsiella pneumoniae subsp. pneumoniae (strain ATCC 700721 / MGH 78578) protein is Na(+)-translocating NADH-quinone reductase subunit A.